The following is a 395-amino-acid chain: Flagellin D (395 aa).

The protein belongs to the bacterial flagellin family.

It localises to the secreted. The protein resides in the bacterial flagellum. In terms of biological role, flagellin is the subunit protein which polymerizes to form the filaments of bacterial flagella. The protein is Flagellin D (flaD) of Rhizobium meliloti (Ensifer meliloti).